The sequence spans 227 residues: Cytochrome c oxidase subunit 2 (227 aa).

At 1-14 (MAYPFQLGLQDATS) the chain is on the mitochondrial intermembrane side. A helical transmembrane segment spans residues 15–45 (PIMEELTNFHDHTLMIVFLISSLVLYIISLM). Residues 46-59 (LTTKLTHTSTMDAQ) are Mitochondrial matrix-facing. Residues 60 to 87 (EVETIWTILPAVILILIALPSLRILYMM) traverse the membrane as a helical segment. Residues 88–227 (DEINNPVLTV…HFENWSASMI (140 aa)) lie on the Mitochondrial intermembrane side of the membrane. Residues His161, Cys196, Glu198, Cys200, His204, and Met207 each contribute to the Cu cation site. Glu198 is a Mg(2+) binding site.

It belongs to the cytochrome c oxidase subunit 2 family. In terms of assembly, component of the cytochrome c oxidase (complex IV, CIV), a multisubunit enzyme composed of 14 subunits. The complex is composed of a catalytic core of 3 subunits MT-CO1, MT-CO2 and MT-CO3, encoded in the mitochondrial DNA, and 11 supernumerary subunits COX4I, COX5A, COX5B, COX6A, COX6B, COX6C, COX7A, COX7B, COX7C, COX8 and NDUFA4, which are encoded in the nuclear genome. The complex exists as a monomer or a dimer and forms supercomplexes (SCs) in the inner mitochondrial membrane with NADH-ubiquinone oxidoreductase (complex I, CI) and ubiquinol-cytochrome c oxidoreductase (cytochrome b-c1 complex, complex III, CIII), resulting in different assemblies (supercomplex SCI(1)III(2)IV(1) and megacomplex MCI(2)III(2)IV(2)). Found in a complex with TMEM177, COA6, COX18, COX20, SCO1 and SCO2. Interacts with TMEM177 in a COX20-dependent manner. Interacts with COX20. Interacts with COX16. Cu cation serves as cofactor.

Its subcellular location is the mitochondrion inner membrane. It catalyses the reaction 4 Fe(II)-[cytochrome c] + O2 + 8 H(+)(in) = 4 Fe(III)-[cytochrome c] + 2 H2O + 4 H(+)(out). Functionally, component of the cytochrome c oxidase, the last enzyme in the mitochondrial electron transport chain which drives oxidative phosphorylation. The respiratory chain contains 3 multisubunit complexes succinate dehydrogenase (complex II, CII), ubiquinol-cytochrome c oxidoreductase (cytochrome b-c1 complex, complex III, CIII) and cytochrome c oxidase (complex IV, CIV), that cooperate to transfer electrons derived from NADH and succinate to molecular oxygen, creating an electrochemical gradient over the inner membrane that drives transmembrane transport and the ATP synthase. Cytochrome c oxidase is the component of the respiratory chain that catalyzes the reduction of oxygen to water. Electrons originating from reduced cytochrome c in the intermembrane space (IMS) are transferred via the dinuclear copper A center (CU(A)) of subunit 2 and heme A of subunit 1 to the active site in subunit 1, a binuclear center (BNC) formed by heme A3 and copper B (CU(B)). The BNC reduces molecular oxygen to 2 water molecules using 4 electrons from cytochrome c in the IMS and 4 protons from the mitochondrial matrix. The sequence is that of Cytochrome c oxidase subunit 2 (MT-CO2) from Batomys granti (Luzon hairy-tailed rat).